We begin with the raw amino-acid sequence, 494 residues long: DnaJ-related protein rsp1 (494 aa).

Residues 12-78 enclose the J domain; that stretch reads DYYTILGAES…KLRELFDQRR (67 aa). Positions 229 to 242 are enriched in polar residues; that stretch reads SEISNGLNSNGVEN. Positions 229-354 are disordered; sequence SEISNGLNSN…NDSTSNSTEY (126 aa). Low complexity predominate over residues 243 to 256; that stretch reads SSITKSSPRSSSSS. Positions 270-287 are enriched in polar residues; that stretch reads IFTSPNTPEHPSVYQTDI. A compositionally biased stretch (low complexity) spans 321-331; it reads LSRSKSSSLSR. Polar residues predominate over residues 332–354; it reads NQTRSQLNDLSAENDSTSNSTEY.

In terms of assembly, interacts iwth ssa1.

The protein localises to the cytoplasm. Its subcellular location is the cytoskeleton. It is found in the nucleus. Its function is as follows. Has a role in the proper organization of the interphase microtubule cytoskeleton. Required for equatorial microtubule organizing center (eMTOC) disassembly into satellites, contributing to the dynamic redistribution of MTOC components for organization of interphase microtubules. This is DnaJ-related protein rsp1 (rsp1) from Schizosaccharomyces pombe (strain 972 / ATCC 24843) (Fission yeast).